A 448-amino-acid polypeptide reads, in one-letter code: Methylenetetrahydrofolate--tRNA-(uracil-5-)-methyltransferase TrmFO (448 aa).

13-18 (GAGLAG) contributes to the FAD binding site.

It belongs to the MnmG family. TrmFO subfamily. FAD serves as cofactor.

The protein localises to the cytoplasm. It carries out the reaction uridine(54) in tRNA + (6R)-5,10-methylene-5,6,7,8-tetrahydrofolate + NADH + H(+) = 5-methyluridine(54) in tRNA + (6S)-5,6,7,8-tetrahydrofolate + NAD(+). It catalyses the reaction uridine(54) in tRNA + (6R)-5,10-methylene-5,6,7,8-tetrahydrofolate + NADPH + H(+) = 5-methyluridine(54) in tRNA + (6S)-5,6,7,8-tetrahydrofolate + NADP(+). Its function is as follows. Catalyzes the folate-dependent formation of 5-methyl-uridine at position 54 (M-5-U54) in all tRNAs. The protein is Methylenetetrahydrofolate--tRNA-(uracil-5-)-methyltransferase TrmFO of Streptococcus pyogenes serotype M2 (strain MGAS10270).